Reading from the N-terminus, the 294-residue chain is Light-independent protochlorophyllide reductase iron-sulfur ATP-binding protein (294 aa).

ATP-binding positions include 10 to 15 and K39; that span reads GIGKST. S14 contributes to the Mg(2+) binding site. C95 and C129 together coordinate [4Fe-4S] cluster. 180-181 is an ATP binding site; the sequence is NR.

This sequence belongs to the NifH/BchL/ChlL family. Homodimer. Protochlorophyllide reductase is composed of three subunits; ChlL, ChlN and ChlB. It depends on [4Fe-4S] cluster as a cofactor.

It localises to the plastid. The protein resides in the chloroplast. It catalyses the reaction chlorophyllide a + oxidized 2[4Fe-4S]-[ferredoxin] + 2 ADP + 2 phosphate = protochlorophyllide a + reduced 2[4Fe-4S]-[ferredoxin] + 2 ATP + 2 H2O. The protein operates within porphyrin-containing compound metabolism; chlorophyll biosynthesis (light-independent). Component of the dark-operative protochlorophyllide reductase (DPOR) that uses Mg-ATP and reduced ferredoxin to reduce ring D of protochlorophyllide (Pchlide) to form chlorophyllide a (Chlide). This reaction is light-independent. The L component serves as a unique electron donor to the NB-component of the complex, and binds Mg-ATP. The chain is Light-independent protochlorophyllide reductase iron-sulfur ATP-binding protein from Pleurastrum terricola (Filamentous green alga).